The following is a 225-amino-acid chain: 2-C-methyl-D-erythritol 4-phosphate cytidylyltransferase (225 aa).

This sequence belongs to the IspD/TarI cytidylyltransferase family. IspD subfamily.

It carries out the reaction 2-C-methyl-D-erythritol 4-phosphate + CTP + H(+) = 4-CDP-2-C-methyl-D-erythritol + diphosphate. Its pathway is isoprenoid biosynthesis; isopentenyl diphosphate biosynthesis via DXP pathway; isopentenyl diphosphate from 1-deoxy-D-xylulose 5-phosphate: step 2/6. Catalyzes the formation of 4-diphosphocytidyl-2-C-methyl-D-erythritol from CTP and 2-C-methyl-D-erythritol 4-phosphate (MEP). The chain is 2-C-methyl-D-erythritol 4-phosphate cytidylyltransferase from Prochlorococcus marinus (strain NATL2A).